Reading from the N-terminus, the 391-residue chain is 3-ketoacyl-CoA thiolase (391 aa).

The active-site Acyl-thioester intermediate is C95. Active-site proton acceptor residues include H347 and C377.

The protein belongs to the thiolase-like superfamily. Thiolase family. As to quaternary structure, heterotetramer of two alpha chains (FadB) and two beta chains (FadA).

The protein localises to the cytoplasm. It carries out the reaction an acyl-CoA + acetyl-CoA = a 3-oxoacyl-CoA + CoA. The protein operates within lipid metabolism; fatty acid beta-oxidation. Functionally, catalyzes the final step of fatty acid oxidation in which acetyl-CoA is released and the CoA ester of a fatty acid two carbons shorter is formed. In Vibrio parahaemolyticus serotype O3:K6 (strain RIMD 2210633), this protein is 3-ketoacyl-CoA thiolase.